The following is a 747-amino-acid chain: Threonine synthase-like 1 (747 aa).

Lysine 351 is subject to N6-(pyridoxal phosphate)lysine.

This sequence belongs to the threonine synthase family. The cofactor is pyridoxal 5'-phosphate.

In Mus musculus (Mouse), this protein is Threonine synthase-like 1 (Thnsl1).